Consider the following 2155-residue polypeptide: Conidial pigment polyketide synthase PfmaE (2155 aa).

Residues 8-245 are N-terminal acylcarrier protein transacylase domain (SAT); the sequence is LLFGDQSLDT…TAIPVYGPYH (238 aa). Residues 381–813 form the Ketosynthase family 3 (KS3) domain; that stretch reads KCKLAIVGMA…GGNTGLLLED (433 aa). Active-site for beta-ketoacyl synthase activity residues include C553, H688, and H731. Residues 910–1231 are malonyl-CoA:ACP transacylase (MAT) domain; that stretch reads AFMFTGQGSH…LCTLHSAGLN (322 aa). The active-site For acyl/malonyl transferase activity is S1001. The segment at 1293–1608 is product template (PT) domain; that stretch reads TTTVQKVVRE…PRKVLNVVLP (316 aa). Residues 1297-1428 form an N-terminal hotdog fold region; sequence QKVVREEVKG…CKVFFGDNEE (132 aa). In terms of domain architecture, PKS/mFAS DH spans 1297-1604; that stretch reads QKVVREEVKG…FQAIPRKVLN (308 aa). H1329 serves as the catalytic Proton acceptor; for dehydratase activity. Residues 1455–1604 are C-terminal hotdog fold; sequence DASKIGRGLA…FQAIPRKVLN (150 aa). D1516 functions as the Proton donor; for dehydratase activity in the catalytic mechanism. Carrier domains lie at 1653 to 1730 and 1779 to 1856; these read LTKN…AQFE and GNVS…GIED. S1690 carries the post-translational modification O-(pantetheine 4'-phosphoryl)serine. The interval 1738–1782 is disordered; sequence EENAHSSASSDSADMETESNFTTPSDDSEKDEVKGDAPAADGNVS. At S1816 the chain carries O-(pantetheine 4'-phosphoryl)serine. The segment at 1855-1892 is disordered; the sequence is EDKPKRAAPKSAKQEPAKPEPKVQGEAKAHTNPVDNYP. The span at 1866–1883 shows a compositional bias: basic and acidic residues; it reads AKQEPAKPEPKVQGEAKA. Residues 1911–2041 are thioesterase (TE) domain; it reads QLFMIPDGSG…LGEGDDAEAK (131 aa).

It participates in pigment biosynthesis; melanin biosynthesis. Its function is as follows. Non-reducing polyketide synthase; part of the gene cluster that mediates the biosynthesis of dihydroxynaphthalene (DHN)-melanin, a bluish-green pigment forming a dark layer in the conidial wall that protects the conidia from UV radiations. The first step of the pathway is the production of the pentaketide 1,3,6,8-tetrahydroxynaphthalene (1,3,6,8-THN or T4HN) by the polyketide synthase PfmaE though condensation of acetyl-CoA with malonyl-CoA. T4HN is not stable and easily oxidizes into the stable form flaviolin. T4HN is also substrate of the hydroxynaphthalene reductase PfmaG to yield scytalone. The scytalone dehydratase PfmaJ then reduces scytalone to 1,3,8-THN. 1,3,8-THN is then substrate of the hydroxynaphthalene reductase PfmaI to yield vermelone. Vermelone is further converted by the multicopper oxidase PfmaD to 1,8-DHN. Finally the laccase PFICI_06862 transforms 1,8-DHN to DHN-melanin. The roles of the 5-oxoprolinase PfmaA and the proline iminopeptidase PfmaB within the cluster have not been elucidated yet. The protein is Conidial pigment polyketide synthase PfmaE of Pestalotiopsis fici (strain W106-1 / CGMCC3.15140).